A 237-amino-acid polypeptide reads, in one-letter code: Phosphoribosylaminoimidazole-succinocarboxamide synthase (237 aa).

It belongs to the SAICAR synthetase family.

It catalyses the reaction 5-amino-1-(5-phospho-D-ribosyl)imidazole-4-carboxylate + L-aspartate + ATP = (2S)-2-[5-amino-1-(5-phospho-beta-D-ribosyl)imidazole-4-carboxamido]succinate + ADP + phosphate + 2 H(+). The protein operates within purine metabolism; IMP biosynthesis via de novo pathway; 5-amino-1-(5-phospho-D-ribosyl)imidazole-4-carboxamide from 5-amino-1-(5-phospho-D-ribosyl)imidazole-4-carboxylate: step 1/2. This is Phosphoribosylaminoimidazole-succinocarboxamide synthase from Shigella sonnei (strain Ss046).